The following is a 213-amino-acid chain: Putative nascent polypeptide-associated complex subunit alpha-like protein (213 aa).

Residues Met-1–Val-46 are disordered. The span at Gln-15–Glu-28 shows a compositional bias: polar residues. Residues Ser-29 to Asp-42 show a composition bias toward acidic residues. Ser-43 and Ser-131 each carry phosphoserine. One can recognise an NAC-A/B domain in the interval Arg-69 to Ala-134. N6-acetyllysine; alternate is present on Lys-141. Residue Lys-141 forms a Glycyl lysine isopeptide (Lys-Gly) (interchain with G-Cter in SUMO2); alternate linkage. Residue Thr-160 is modified to Phosphothreonine. A phosphoserine mark is found at Ser-165, Ser-185, and Ser-201. A UBA domain is found at Val-175–Leu-211. Position 212 is a phosphothreonine (Thr-212).

This sequence belongs to the NAC-alpha family.

This Homo sapiens (Human) protein is Putative nascent polypeptide-associated complex subunit alpha-like protein.